A 164-amino-acid chain; its full sequence is B-phycoerythrin alpha chain (164 aa).

Residues C82 and C139 each coordinate (2R,3E)-phycoerythrobilin.

The protein belongs to the phycobiliprotein family. As to quaternary structure, heteromer of 6 alpha, 6 beta and one gamma chain. Contains two covalently linked bilin chromophores.

It localises to the plastid. It is found in the chloroplast thylakoid membrane. Light-harvesting photosynthetic bile pigment-protein from the phycobiliprotein complex. The chain is B-phycoerythrin alpha chain (cpeA) from Porphyridium purpureum (Red alga).